Here is a 243-residue protein sequence, read N- to C-terminus: Probable aquaporin SIP1-2 (243 aa).

Helical transmembrane passes span 12-32 (VITF…AAIV) and 42-62 (WAPL…FTVI). Positions 72–74 (NPC) match the NPA 1 motif. The next 3 membrane-spanning stretches (helical) occupy residues 90-110 (FSLA…AITI), 135-155 (GAIS…LIIL), and 162-182 (LAKT…GSKF). The short motif at 188-190 (NPA) is the NPA 2 element. Residues 210–230 (VYWISSYTGAILSAMLFRIIF) form a helical membrane-spanning segment.

This sequence belongs to the MIP/aquaporin (TC 1.A.8) family. SIP (TC 1.A.8.10) subfamily. In terms of tissue distribution, expressed in roots and above ground. Expressed in elongating regions of the root tips, cotyledons, minor veins and hydathode cells of the rosette leaves. Weakly expressed in vascular tissues of the flower petals, filaments of stamens, upper part of the styles and receptacles of the siliques.

It localises to the endoplasmic reticulum membrane. Water channel required to facilitate the transport of water across cell membrane. This is Probable aquaporin SIP1-2 (SIP1-2) from Arabidopsis thaliana (Mouse-ear cress).